Reading from the N-terminus, the 74-residue chain is Mucroporin (74 aa).

The N-terminal stretch at 1–22 is a signal peptide; sequence MKVKFLLAVFLIVLVVTDHCHA. K39 is modified (lysine amide). The propeptide occupies 45-74; the sequence is QMEARFEPQNRNYRKRELDLEKLFANMPDY.

This sequence belongs to the non-disulfide-bridged peptide (NDBP) superfamily. Short antimicrobial peptide (group 4) family. As to expression, expressed by the venom gland.

The protein localises to the secreted. The protein resides in the target cell membrane. In terms of biological role, mucroporin: cationic host defense peptide that have antibacterial activity by breaking membranes. Is more effective on Gram-positive than on Gram-negative bacteria. Minimum inhibitory concentrations (MIC) are the following: MIC=&gt;100 ug/ml against E.coli AB94012, MIC=&gt;100 ug/ml against P.aeruginosa AB93066, MIC=25 ug/ml against B.thuringiensis AB92037, MIC=50 ug/ml against B.subtilis AB91021, MIC=25 ug/ml against S.aureus AB94004, and MIC=25 ug/ml against the methicillin-resistant coagulase-negative Staphylococcus. Its synthetic analog mucroporin-M1 is more effective. Does not show antiviral activity against any of measles, SARS-CoV, influenza H5N1, hepatitis B and HIV-1 viruses. Mutant mucroporin-M1: can inhibit Gram-positive bacteria at low concentrations and antibiotic-resistant pathogens. Minimum inhibitory concentrations (MIC) are the following: MIC=12.5 ug/ml against E.coli AB94012, MIC=100 ug/ml against P.aeruginosa AB93066, MIC=25 ug/ml against B.thuringiensis AB92037, MIC=25 ug/ml against B.subtilis AB91021, MIC=5 ug/ml against S.aureus AB94004, and MIC=5 ug/ml against the methicillin-resistant coagulase-negative Staphylococcus. Also shows antiviral activities against measles (EC(50) of 7.15 ug/ml), SARS-CoV (EC(50) of 14.46 ug/ml), influenza H5N1 viruses (EC(50) of 2.10 mug/ml), HIV-1, and hepatitis B virus. The polypeptide is Mucroporin (Lychas mucronatus (Chinese swimming scorpion)).